We begin with the raw amino-acid sequence, 297 residues long: Palmitoyl-protein thioesterase ABHD10, mitochondrial (297 aa).

A mitochondrion-targeting transit peptide spans 1–43 (MAAWAPCRRWGWAAVSFGRHPGLSASLARKPPRAWWLSACRQK). The 128-residue stretch at 69-196 (IIFIPGYLSN…EIEMKGEWTL (128 aa)) folds into the AB hydrolase-1 domain. Residues serine 143, aspartate 240, and histidine 270 each act as charge relay system in the active site.

The protein belongs to the AB hydrolase superfamily.

The protein localises to the mitochondrion. It carries out the reaction S-hexadecanoyl-L-cysteinyl-[protein] + H2O = L-cysteinyl-[protein] + hexadecanoate + H(+). It catalyses the reaction mycophenolic acid O-acyl-beta-D-glucuronide + H2O = mycophenolate + D-glucuronate + H(+). Inhibited by palmostatin-B. Functionally, acts as an acyl-protein thioesterase that hydrolyzes fatty acids from acylated residues in proteins. Regulates the mitochondrial S-depalmitoylation of the nucleophilic active site residue of peroxiredoxin-5/PRDX5, a key antioxidant protein, therefore modulating mitochondrial antioxidant ability. Also catalyzes the deglucuronidation of mycophenolic acid acyl-glucuronide, an active metabolite of the immunosuppressant drug mycophenolate. The sequence is that of Palmitoyl-protein thioesterase ABHD10, mitochondrial from Mus musculus (Mouse).